A 344-amino-acid polypeptide reads, in one-letter code: Geranylgeranyl pyrophosphate synthase 10, mitochondrial (344 aa).

The N-terminal 40 residues, 1 to 40 (MENREVFVYIVISIFRSLQFLFWRFRPRYNDVTSALTRPL), are a transit peptide targeting the mitochondrion. Isopentenyl diphosphate contacts are provided by K91, R94, and H123. Mg(2+) is bound by residues D130 and D136. Residue R141 participates in dimethylallyl diphosphate binding. R142 contributes to the isopentenyl diphosphate binding site. K229, T230, Q267, K284, and K294 together coordinate dimethylallyl diphosphate.

Belongs to the FPP/GGPP synthase family. In terms of assembly, monomer. Requires Mg(2+) as cofactor.

It localises to the mitochondrion. It catalyses the reaction isopentenyl diphosphate + dimethylallyl diphosphate = (2E)-geranyl diphosphate + diphosphate. The enzyme catalyses isopentenyl diphosphate + (2E)-geranyl diphosphate = (2E,6E)-farnesyl diphosphate + diphosphate. It carries out the reaction isopentenyl diphosphate + (2E,6E)-farnesyl diphosphate = (2E,6E,10E)-geranylgeranyl diphosphate + diphosphate. It functions in the pathway isoprenoid biosynthesis; farnesyl diphosphate biosynthesis; farnesyl diphosphate from geranyl diphosphate and isopentenyl diphosphate: step 1/1. It participates in isoprenoid biosynthesis; geranyl diphosphate biosynthesis; geranyl diphosphate from dimethylallyl diphosphate and isopentenyl diphosphate: step 1/1. Its pathway is isoprenoid biosynthesis; geranylgeranyl diphosphate biosynthesis; geranylgeranyl diphosphate from farnesyl diphosphate and isopentenyl diphosphate: step 1/1. Its function is as follows. Catalyzes the trans-addition of the three molecules of IPP onto DMAPP to form geranylgeranyl pyrophosphate. This is Geranylgeranyl pyrophosphate synthase 10, mitochondrial from Arabidopsis thaliana (Mouse-ear cress).